Consider the following 250-residue polypeptide: tRNA (guanine-N(7)-)-methyltransferase (250 aa).

S-adenosyl-L-methionine-binding residues include E86, E111, D138, and D161. D161 is a catalytic residue. Substrate-binding positions include K165, D197, and 229-232; that span reads TEFE.

It belongs to the class I-like SAM-binding methyltransferase superfamily. TrmB family.

The catalysed reaction is guanosine(46) in tRNA + S-adenosyl-L-methionine = N(7)-methylguanosine(46) in tRNA + S-adenosyl-L-homocysteine. The protein operates within tRNA modification; N(7)-methylguanine-tRNA biosynthesis. Its function is as follows. Catalyzes the formation of N(7)-methylguanine at position 46 (m7G46) in tRNA. This chain is tRNA (guanine-N(7)-)-methyltransferase, found in Treponema pallidum (strain Nichols).